A 343-amino-acid chain; its full sequence is NADH-quinone oxidoreductase subunit H (343 aa).

Helical transmembrane passes span 5–25 (FIIEKSVVIVAVFALTMLMAM), 76–96 (FLFVVGPAIAMSTALMTSAVI), 119–139 (ALLYIFAVVSVGVYGIMIGGW), 158–178 (VSYEVAMGLSMIALLMMTGTL), 190–210 (MNWNVFYQPVSFLIFLICAFA), 243–263 (LFAEYANMFISSAILAILFFG), 284–304 (ILGFLALFIKICGFIFFYMWV), and 323–343 (ILIPLAILNIMVTGICLLLFK).

Belongs to the complex I subunit 1 family. In terms of assembly, NDH-1 is composed of 14 different subunits. Subunits NuoA, H, J, K, L, M, N constitute the membrane sector of the complex.

The protein localises to the cell inner membrane. It catalyses the reaction a quinone + NADH + 5 H(+)(in) = a quinol + NAD(+) + 4 H(+)(out). NDH-1 shuttles electrons from NADH, via FMN and iron-sulfur (Fe-S) centers, to quinones in the respiratory chain. The immediate electron acceptor for the enzyme in this species is believed to be ubiquinone. Couples the redox reaction to proton translocation (for every two electrons transferred, four hydrogen ions are translocated across the cytoplasmic membrane), and thus conserves the redox energy in a proton gradient. This subunit may bind ubiquinone. The chain is NADH-quinone oxidoreductase subunit H from Flavobacterium psychrophilum (strain ATCC 49511 / DSM 21280 / CIP 103535 / JIP02/86).